Here is a 561-residue protein sequence, read N- to C-terminus: MELDQVGWRRSRKLCTDNLDQGSKTLETCKNIGGYFKPQGPGTEHINELITGDSIVSAEAVWDHVTMANRELAFKAGDVIKVLDASNKDWWWGQIDDEEGWFPASFVRLWVNQEDGVEEGPSDVQNGHLDPNSDCLCLGRPLQNRDQMRANVINEIMSTERHYIKHLKDICEGYLKQCRKRRDMFSDEQLKVIFGNIEDIYRFQMGFVRDLEKQYNNDDPHLSEIGPCFLEHQDGFWIYSEYCNNHLDACMELSKLMKDSRYQHFFEACRLLQQMIDIAIDGFLLTPVQKICKYPLQLAELLKYTAQDHSDYRYVAAALAVMRNVTQQINERKRRLENIDKIAQWQASVLDWEGEDILDRSSELIYTGEMAWIYQPYGRNQQRVFFLFDHQMVLCKKDLIRRDILYYKGRIDMDKYEVVDIEDGRDDDFNVSMKNAFKLHNKETEEIHLFFAKKLEEKIRWLRAFREERKMVQEDEKIGFEISENQKRQAAMTVRKVSKQKGVNSARSVPPSYPPPQDPLNQGQYLVPDGIAQSQVFEFTEPKRSQSPFWQNFSRLTPFKK.

The region spanning 53-112 (DSIVSAEAVWDHVTMANRELAFKAGDVIKVLDASNKDWWWGQIDDEEGWFPASFVRLWVN) is the SH3 domain. Residues 145–155 (RDQMRANVINE) form an interaction with GPHN region. The DH domain maps to 148–332 (MRANVINEIM…RNVTQQINER (185 aa)). Positions 363-470 (ELIYTGEMAW…WLRAFREERK (108 aa)) constitute a PH domain. The interval 499-524 (KQKGVNSARSVPPSYPPPQDPLNQGQ) is disordered. S547 is subject to Phosphoserine.

Interacts with GPHN.

It is found in the cytoplasm. The protein resides in the postsynaptic density. Functionally, acts as a guanine nucleotide exchange factor (GEF) for CDC42. Promotes formation of GPHN clusters. The polypeptide is Rho guanine nucleotide exchange factor 9 (ARHGEF9) (Bos taurus (Bovine)).